Reading from the N-terminus, the 411-residue chain is Argininosuccinate lyase (411 aa).

The protein belongs to the lyase 1 family. Argininosuccinate lyase subfamily.

It is found in the cytoplasm. The catalysed reaction is 2-(N(omega)-L-arginino)succinate = fumarate + L-arginine. It functions in the pathway amino-acid biosynthesis; L-arginine biosynthesis; L-arginine from L-ornithine and carbamoyl phosphate: step 3/3. This is Argininosuccinate lyase from Legionella pneumophila subsp. pneumophila (strain Philadelphia 1 / ATCC 33152 / DSM 7513).